The chain runs to 538 residues: Chaperonin GroEL 2 (538 aa).

ATP contacts are provided by residues 29 to 32 (TLGP), 86 to 90 (DGTTT), glycine 412, 479 to 481 (NAA), and aspartate 495.

Belongs to the chaperonin (HSP60) family. As to quaternary structure, forms a cylinder of 14 subunits composed of two heptameric rings stacked back-to-back. Interacts with the co-chaperonin GroES.

It localises to the cytoplasm. The enzyme catalyses ATP + H2O + a folded polypeptide = ADP + phosphate + an unfolded polypeptide.. Together with its co-chaperonin GroES, plays an essential role in assisting protein folding. The GroEL-GroES system forms a nano-cage that allows encapsulation of the non-native substrate proteins and provides a physical environment optimized to promote and accelerate protein folding. The polypeptide is Chaperonin GroEL 2 (Renibacterium salmoninarum (strain ATCC 33209 / DSM 20767 / JCM 11484 / NBRC 15589 / NCIMB 2235)).